A 216-amino-acid chain; its full sequence is MGNLVIAVDGPAGAGKSTIAKIVAKKLNINYIDTGAMYRAVTYKCLKSGIDVNNEKEVIQIAENSDIDFKDNNIYLDKEVINEEIRTIEVSNNVSNVAKIKEVRQLMVEVQRKIGMKNSVILDGRDIGSYVFPDADYKFFLVATPEERGNRRYKELCNKGYNTTLEEVIEDIIRRDEIDSNREFAPLVKANDALEIDTTGKTIEEVVEEVVSKINL.

10 to 18 (GPAGAGKST) serves as a coordination point for ATP.

Belongs to the cytidylate kinase family. Type 1 subfamily.

It localises to the cytoplasm. It carries out the reaction CMP + ATP = CDP + ADP. It catalyses the reaction dCMP + ATP = dCDP + ADP. The polypeptide is Cytidylate kinase (Clostridioides difficile (strain 630) (Peptoclostridium difficile)).